Consider the following 382-residue polypeptide: Queuine tRNA-ribosyltransferase (382 aa).

The active-site Proton acceptor is the aspartate 93. Substrate contacts are provided by residues aspartate 93–phenylalanine 97, aspartate 147, glutamine 191, and glycine 218. Positions glycine 249–aspartate 255 are RNA binding. Catalysis depends on aspartate 268, which acts as the Nucleophile. An RNA binding; important for wobble base 34 recognition region spans residues threonine 273–arginine 277. Zn(2+) contacts are provided by cysteine 306, cysteine 308, cysteine 311, and histidine 337.

The protein belongs to the queuine tRNA-ribosyltransferase family. Homodimer. Within each dimer, one monomer is responsible for RNA recognition and catalysis, while the other monomer binds to the replacement base PreQ1. It depends on Zn(2+) as a cofactor.

It carries out the reaction 7-aminomethyl-7-carbaguanine + guanosine(34) in tRNA = 7-aminomethyl-7-carbaguanosine(34) in tRNA + guanine. Its pathway is tRNA modification; tRNA-queuosine biosynthesis. In terms of biological role, catalyzes the base-exchange of a guanine (G) residue with the queuine precursor 7-aminomethyl-7-deazaguanine (PreQ1) at position 34 (anticodon wobble position) in tRNAs with GU(N) anticodons (tRNA-Asp, -Asn, -His and -Tyr). Catalysis occurs through a double-displacement mechanism. The nucleophile active site attacks the C1' of nucleotide 34 to detach the guanine base from the RNA, forming a covalent enzyme-RNA intermediate. The proton acceptor active site deprotonates the incoming PreQ1, allowing a nucleophilic attack on the C1' of the ribose to form the product. After dissociation, two additional enzymatic reactions on the tRNA convert PreQ1 to queuine (Q), resulting in the hypermodified nucleoside queuosine (7-(((4,5-cis-dihydroxy-2-cyclopenten-1-yl)amino)methyl)-7-deazaguanosine). The sequence is that of Queuine tRNA-ribosyltransferase from Actinobacillus pleuropneumoniae serotype 3 (strain JL03).